We begin with the raw amino-acid sequence, 236 residues long: Urease accessory protein UreF (236 aa).

This sequence belongs to the UreF family. UreD, UreF and UreG form a complex that acts as a GTP-hydrolysis-dependent molecular chaperone, activating the urease apoprotein by helping to assemble the nickel containing metallocenter of UreC. The UreE protein probably delivers the nickel.

Its subcellular location is the cytoplasm. Its function is as follows. Required for maturation of urease via the functional incorporation of the urease nickel metallocenter. This is Urease accessory protein UreF from Granulibacter bethesdensis (strain ATCC BAA-1260 / CGDNIH1).